Here is a 295-residue protein sequence, read N- to C-terminus: Trimeric intracellular cation channel type A (295 aa).

Residues 1–18 lie on the Lumenal side of the membrane; it reads MELLSALSLDDLAASFSK. The helical transmembrane segment at 19–39 threads the bilayer; sequence LPVFPLFDVAYYIISILYLKY. The Cytoplasmic segment spans residues 40-51; it reads EPGAVDLSKRSP. A helical transmembrane segment spans residues 52–72; the sequence is VASWLCAMLYCFGSYILADVL. The Lumenal segment spans residues 73–84; it reads LGESPIHYFSNN. Glycine 74 provides a ligand contact to Ca(2+). The helical transmembrane segment at 85–105 threads the bilayer; the sequence is ANILLASAVWYLTFFCPLNIF. The Cytoplasmic portion of the chain corresponds to 106-144; the sequence is YKIVSFLPVKLVLVGMKEVVRVRKIAMGIHHAHHHYHHG. A 1,2-diacyl-sn-glycero-3-phospho-(1D-myo-inositol-4,5-bisphosphate)-binding residues include lysine 122 and arginine 126. Residues 145–165 traverse the membrane as a helical segment; the sequence is WVIMVLIGWVKGSGVALMSNL. At 166-178 the chain is on the lumenal side; the sequence is EQLLRGVWKPETN. The helical transmembrane segment at 179–199 threads the bilayer; that stretch reads EILHMSFPTKASLYGAILFTL. Residues 200-201 lie on the Cytoplasmic side of the membrane; that stretch reads QQ. The helical transmembrane segment at 202–222 threads the bilayer; the sequence is AHWLPISKAYLIFFFTLFMAV. The Lumenal portion of the chain corresponds to 223-233; it reads CKIYMTATHSH. The chain crosses the membrane as a helical span at residues 234-254; that stretch reads GSPFAIFESGICYVLFAAANG. Topologically, residues 255-295 are cytoplasmic; it reads DHDDHGNHHHHHDDHDVSHSAGKSKEEHNEGTRKRKTKKAE. Positions 258 to 295 are disordered; sequence DHGNHHHHHDDHDVSHSAGKSKEEHNEGTRKRKTKKAE. Positions 267–286 are enriched in basic and acidic residues; it reads DDHDVSHSAGKSKEEHNEGT.

Belongs to the TMEM38 family. As to quaternary structure, homotrimer; conformation seems to be controled by binding to diacylglycerol (DAG).

The protein localises to the sarcoplasmic reticulum membrane. It localises to the nucleus membrane. The enzyme catalyses K(+)(in) = K(+)(out). Channel activity is activated by a change of voltage within the sarcoplasmic reticulum lumen and blocked by luminal high Ca(2+) levels. Its function is as follows. Intracellular monovalent cation channel required for maintenance of rapid intracellular calcium release. Acts as a potassium counter-ion channel that functions in synchronization with calcium release from intracellular stores. Opened by a change of voltage within the sarcoplasmic reticulum lumen. This chain is Trimeric intracellular cation channel type A (tmem38a), found in Xenopus laevis (African clawed frog).